The chain runs to 278 residues: Shikimate dehydrogenase (NADP(+)) (278 aa).

Shikimate contacts are provided by residues 14–16 (SKS) and threonine 61. The active-site Proton acceptor is the lysine 65. Shikimate is bound by residues asparagine 86 and aspartate 102. Residues 127-131 (GAGGA), 151-156 (NRTASK), and methionine 221 contribute to the NADP(+) site. Position 223 (tyrosine 223) interacts with shikimate. Glycine 245 serves as a coordination point for NADP(+).

The protein belongs to the shikimate dehydrogenase family. In terms of assembly, homodimer.

It catalyses the reaction shikimate + NADP(+) = 3-dehydroshikimate + NADPH + H(+). It participates in metabolic intermediate biosynthesis; chorismate biosynthesis; chorismate from D-erythrose 4-phosphate and phosphoenolpyruvate: step 4/7. Involved in the biosynthesis of the chorismate, which leads to the biosynthesis of aromatic amino acids. Catalyzes the reversible NADPH linked reduction of 3-dehydroshikimate (DHSA) to yield shikimate (SA). The sequence is that of Shikimate dehydrogenase (NADP(+)) from Saccharophagus degradans (strain 2-40 / ATCC 43961 / DSM 17024).